A 508-amino-acid polypeptide reads, in one-letter code: Probable cytosol aminopeptidase (508 aa).

Mn(2+) contacts are provided by lysine 274 and aspartate 279. Residue lysine 286 is part of the active site. Aspartate 297, aspartate 356, and glutamate 358 together coordinate Mn(2+). Arginine 360 is an active-site residue.

Belongs to the peptidase M17 family. Requires Mn(2+) as cofactor.

Its subcellular location is the cytoplasm. It carries out the reaction Release of an N-terminal amino acid, Xaa-|-Yaa-, in which Xaa is preferably Leu, but may be other amino acids including Pro although not Arg or Lys, and Yaa may be Pro. Amino acid amides and methyl esters are also readily hydrolyzed, but rates on arylamides are exceedingly low.. The catalysed reaction is Release of an N-terminal amino acid, preferentially leucine, but not glutamic or aspartic acids.. Its function is as follows. Presumably involved in the processing and regular turnover of intracellular proteins. Catalyzes the removal of unsubstituted N-terminal amino acids from various peptides. The polypeptide is Probable cytosol aminopeptidase (Cutibacterium acnes (strain DSM 16379 / KPA171202) (Propionibacterium acnes)).